A 253-amino-acid polypeptide reads, in one-letter code: Vacuolar v-SNARE NYV1 (253 aa).

Over 1–231 (MKRFNVSYVE…EIMWWQKVKN (231 aa)) the chain is Cytoplasmic. Residues 147–166 (LNSSGNGQSSNGNGQNTISD) form a disordered region. A compositionally biased stretch (low complexity) spans 148–162 (NSSGNGQSSNGNGQN). One can recognise a v-SNARE coiled-coil homology domain in the interval 167-227 (IGDATEDQIK…VNIKEIMWWQ (61 aa)). The helical; Anchor for type IV membrane protein transmembrane segment at 232–252 (ITLLTFTIILFVSAAFMFFYL) threads the bilayer. A topological domain (vacuolar) is located at residue Trp-253.

This sequence belongs to the synaptobrevin family. In terms of assembly, present in a pentameric cis-SNARE complex composed of the v-SNAREs NYV1, VTI1 and YKT6, and the t-SNAREs VAM3 and VAM7 on vacuolar membranes. Interacts in trans with the cognate t-SNARE VAM3 during the docking step of homotypic vacuolar fusion. Interacts with the vacuolar transporter chaperone (VTC) complex and the vacuolar Ca(2+)-ATPase PMC1.

It localises to the vacuole membrane. In terms of biological role, vacuolar v-SNARE required for docking. Only involved in homotypic vacuole fusion. Required for Ca(2+) efflux from the vacuolar lumen, a required signal for subsequent membrane fusion events, by inhibiting vacuolar Ca(2+)-ATPase PMC1 and promoting Ca(2+) release when forming trans-SNARE assemblies during the docking step. The chain is Vacuolar v-SNARE NYV1 (NYV1) from Saccharomyces cerevisiae (strain ATCC 204508 / S288c) (Baker's yeast).